Consider the following 111-residue polypeptide: Aspartate 1-decarboxylase (111 aa).

Ser25 serves as the catalytic Schiff-base intermediate with substrate; via pyruvic acid. Ser25 is subject to Pyruvic acid (Ser). Residue Thr57 participates in substrate binding. Tyr58 serves as the catalytic Proton donor. A substrate-binding site is contributed by 73-75; it reads GPA.

It belongs to the PanD family. Heterooctamer of four alpha and four beta subunits. It depends on pyruvate as a cofactor. Is synthesized initially as an inactive proenzyme, which is activated by self-cleavage at a specific serine bond to produce a beta-subunit with a hydroxyl group at its C-terminus and an alpha-subunit with a pyruvoyl group at its N-terminus.

It is found in the cytoplasm. The catalysed reaction is L-aspartate + H(+) = beta-alanine + CO2. It functions in the pathway cofactor biosynthesis; (R)-pantothenate biosynthesis; beta-alanine from L-aspartate: step 1/1. Its function is as follows. Catalyzes the pyruvoyl-dependent decarboxylation of aspartate to produce beta-alanine. This is Aspartate 1-decarboxylase from Francisella tularensis subsp. tularensis (strain FSC 198).